We begin with the raw amino-acid sequence, 275 residues long: Shikimate dehydrogenase (NADP(+)) (275 aa).

Residues 17 to 19 (SKS) and T64 contribute to the shikimate site. Residue K68 is the Proton acceptor of the active site. E80 contacts NADP(+). Residues N89 and D105 each coordinate shikimate. Residues 129–133 (GAGGA), 152–157 (NRTFFK), and M216 contribute to the NADP(+) site. A shikimate-binding site is contributed by Y218. Residue G240 coordinates NADP(+).

The protein belongs to the shikimate dehydrogenase family. Homodimer.

It carries out the reaction shikimate + NADP(+) = 3-dehydroshikimate + NADPH + H(+). It participates in metabolic intermediate biosynthesis; chorismate biosynthesis; chorismate from D-erythrose 4-phosphate and phosphoenolpyruvate: step 4/7. In terms of biological role, involved in the biosynthesis of the chorismate, which leads to the biosynthesis of aromatic amino acids. Catalyzes the reversible NADPH linked reduction of 3-dehydroshikimate (DHSA) to yield shikimate (SA). This chain is Shikimate dehydrogenase (NADP(+)), found in Pectobacterium atrosepticum (strain SCRI 1043 / ATCC BAA-672) (Erwinia carotovora subsp. atroseptica).